A 946-amino-acid chain; its full sequence is MKPLSSPLQQYWQTVVERLPEPLAEESLSAQAKSVLTFSDFVQDSVIAHPEWLTELESQPPQADEWQHYAAWLQEALSNVSDEAGLMRELRLFRRRIMVRIAWAQTLALVTEESILQQLSHLAETLIVAARDWLYDACCREWGTPCNAQGEAQPLLILGMGKLGGGELNFSSDIDLIFAWPEHGCTQGGRRELDNAQFFTRMGQRLIKVLDQPTQDGFVYRVDMRLRPFGESGPLVLSFAALEDYYQEQGRDWERYAMVKARIMGDSDGVYANELRAMLRPFVFRRYIDFSVIQSLRNMKGMIAREVRRRGLTDNIKLGAGGIREIEFIVQVFQLIRGGREPSLQSRALLPTLSAIAALHLLSENDAEQLRVAYLFLRRLENLLQSINDEQTQTLPSDELTRARLAWAMDFADWPQLTGVLTAHMANVRRVFNELIGDDESETQEESLSEQWRELWQDALQEDDTTPVLAHLSEDERKQVLMLIADFRKELDKRTIGPRGRQVLDHLMPHLLSDVCAREDAAVTLSRITALLVGIVTRTTYLELLSEFPAALKHLISLCAASPMIASQLARYPLLLDELLDPNTLYQPTATDAYRDELRQYLLRVPEDDEEQQLEALRQFKQAQLLRIAAADIAGTLPVMKVSDHLTWLAEAMIDAVVQQAWVQMVARYGKPNHLNEREGRGFAVVGYGKLGGWELGYSSDLDLIFLHDCPMDAMTDGEREIDGRQFYLRLAQRIMHLFSTRTSSGILYEVDARLRPSGAAGMLVTSAEAFADYQKNEAWTWEHQALVRARVVYGDPQLTAHFDAVRREIMTLPREGKTLQTEVREMREKMRAHLGNKHRDRFDIKADEGGITDIEFITQYLVLRYAHEKPKLTRWSDNVRILELLAQNDIMEEQEAMALTRAYTTLRDELHHLALQELPGHVSEDCFTAERELVRASWQKWLVEE.

An adenylyl removase region spans residues 1–440; that stretch reads MKPLSSPLQQ…VFNELIGDDE (440 aa). The adenylyl transferase stretch occupies residues 449–946; it reads SEQWRELWQD…ASWQKWLVEE (498 aa).

This sequence belongs to the GlnE family. The cofactor is Mg(2+).

The enzyme catalyses [glutamine synthetase]-O(4)-(5'-adenylyl)-L-tyrosine + phosphate = [glutamine synthetase]-L-tyrosine + ADP. The catalysed reaction is [glutamine synthetase]-L-tyrosine + ATP = [glutamine synthetase]-O(4)-(5'-adenylyl)-L-tyrosine + diphosphate. In terms of biological role, involved in the regulation of glutamine synthetase GlnA, a key enzyme in the process to assimilate ammonia. When cellular nitrogen levels are high, the C-terminal adenylyl transferase (AT) inactivates GlnA by covalent transfer of an adenylyl group from ATP to specific tyrosine residue of GlnA, thus reducing its activity. Conversely, when nitrogen levels are low, the N-terminal adenylyl removase (AR) activates GlnA by removing the adenylyl group by phosphorolysis, increasing its activity. The regulatory region of GlnE binds the signal transduction protein PII (GlnB) which indicates the nitrogen status of the cell. The protein is Bifunctional glutamine synthetase adenylyltransferase/adenylyl-removing enzyme of Escherichia coli O45:K1 (strain S88 / ExPEC).